A 2057-amino-acid polypeptide reads, in one-letter code: Rho guanine nucleotide exchange factor 17 (2057 aa).

Disordered regions lie at residues 20–361, 375–461, and 481–559; these read ERWS…DTGG, LASP…SNPD, and RVRK…LKPS. Residues Ser-142 and Ser-152 each carry the phosphoserine modification. Low complexity predominate over residues 227 to 249; the sequence is ARASSSSSIASSYPVSRSRAASS. Ser-305 and Ser-308 each carry phosphoserine. Over residues 314–323 the composition is skewed to gly residues; sequence GGLGSAGGVG. 7 positions are modified to phosphoserine: Ser-324, Ser-330, Ser-377, Ser-381, Ser-389, Ser-404, and Ser-414. Residues 382–391 show a composition bias toward polar residues; that stretch reads RGSSRYSSTE. Residues 440-451 are compositionally biased toward basic and acidic residues; it reads PLRDGGLDLDKN. Ser-456 is subject to Phosphoserine. Over residues 507-524 the composition is skewed to low complexity; the sequence is EQSESTLSQSPTSPTTRP. Phosphoserine occurs at positions 538 and 611. Disordered regions lie at residues 615–647 and 663–952; these read AGDM…PEPL and LSST…VRHA. Polar residues predominate over residues 663 to 672; that stretch reads LSSTSAQTNH. At Ser-689 the chain carries Phosphoserine. Phosphothreonine occurs at positions 692 and 695. The segment covering 710-719 has biased composition (polar residues); sequence PNGTELSNGE. Ser-728 carries the post-translational modification Phosphoserine. Over residues 747–760 the composition is skewed to polar residues; the sequence is SVDSNLLGSLNSKT. Residues 820-829 are compositionally biased toward basic and acidic residues; it reads SLSDPSRRGE. Phosphoserine is present on Ser-906. The span at 909–920 shows a compositional bias: basic residues; the sequence is LTRRGSKKRPAR. Basic and acidic residues predominate over residues 922–931; the sequence is SHQELRREEG. A compositionally biased stretch (polar residues) spans 933 to 944; that stretch reads QDQTGSLTQTRS. A phosphoserine mark is found at Ser-953 and Ser-994. Residues 1015–1027 are compositionally biased toward pro residues; that stretch reads GPVDLPCLPPSAP. The segment at 1015 to 1054 is disordered; sequence GPVDLPCLPPSAPPSTETKPSGAARATPDEPAPASKCCSK. The region spanning 1059 to 1247 is the DH domain; it reads MRKHVTMTLL…KQVAERINKG (189 aa). Ser-1324 carries the post-translational modification Phosphoserine. Disordered stretches follow at residues 1555-1713 and 1983-2050; these read RCPR…SSRG and CSTP…DSTN. The span at 1579–1589 shows a compositional bias: acidic residues; that stretch reads LDVEATAEEEA. Residues 1638 to 1674 are compositionally biased toward low complexity; the sequence is SPSPSGTLQSQASQSTISSSFGNEETPSSKEATAETT.

Functionally, acts as a guanine nucleotide exchange factor (GEF) for RhoA GTPases. This chain is Rho guanine nucleotide exchange factor 17 (Arhgef17), found in Mus musculus (Mouse).